The chain runs to 357 residues: Probable dual-specificity RNA methyltransferase RlmN (357 aa).

The Proton acceptor role is filled by E92. The Radical SAM core domain maps to 98-336 (HKYGLSVCVT…CGVRLEHGTD (239 aa)). C105 and C341 form a disulfide bridge. C112, C116, and C119 together coordinate [4Fe-4S] cluster. Residues 164 to 165 (GE), S196, 219 to 221 (SLH), and N297 each bind S-adenosyl-L-methionine. The active-site S-methylcysteine intermediate is C341.

This sequence belongs to the radical SAM superfamily. RlmN family. Requires [4Fe-4S] cluster as cofactor.

It is found in the cytoplasm. It carries out the reaction adenosine(2503) in 23S rRNA + 2 reduced [2Fe-2S]-[ferredoxin] + 2 S-adenosyl-L-methionine = 2-methyladenosine(2503) in 23S rRNA + 5'-deoxyadenosine + L-methionine + 2 oxidized [2Fe-2S]-[ferredoxin] + S-adenosyl-L-homocysteine. The catalysed reaction is adenosine(37) in tRNA + 2 reduced [2Fe-2S]-[ferredoxin] + 2 S-adenosyl-L-methionine = 2-methyladenosine(37) in tRNA + 5'-deoxyadenosine + L-methionine + 2 oxidized [2Fe-2S]-[ferredoxin] + S-adenosyl-L-homocysteine. Specifically methylates position 2 of adenine 2503 in 23S rRNA and position 2 of adenine 37 in tRNAs. The chain is Probable dual-specificity RNA methyltransferase RlmN from Exiguobacterium sibiricum (strain DSM 17290 / CCUG 55495 / CIP 109462 / JCM 13490 / 255-15).